The sequence spans 446 residues: Glutamyl-tRNA reductase (446 aa).

Substrate is bound by residues 49–52 (TCNR), Ser108, 113–115 (ETQ), and Gln119. Cys50 (nucleophile) is an active-site residue. An NADP(+)-binding site is contributed by 188–193 (GAGKMS).

The protein belongs to the glutamyl-tRNA reductase family. In terms of assembly, homodimer.

It catalyses the reaction (S)-4-amino-5-oxopentanoate + tRNA(Glu) + NADP(+) = L-glutamyl-tRNA(Glu) + NADPH + H(+). Its pathway is porphyrin-containing compound metabolism; protoporphyrin-IX biosynthesis; 5-aminolevulinate from L-glutamyl-tRNA(Glu): step 1/2. Functionally, catalyzes the NADPH-dependent reduction of glutamyl-tRNA(Glu) to glutamate 1-semialdehyde (GSA). In Desulforudis audaxviator (strain MP104C), this protein is Glutamyl-tRNA reductase.